The primary structure comprises 463 residues: ATP synthase subunit beta (463 aa).

151–158 (GGAGVGKT) contributes to the ATP binding site.

This sequence belongs to the ATPase alpha/beta chains family. F-type ATPases have 2 components, CF(1) - the catalytic core - and CF(0) - the membrane proton channel. CF(1) has five subunits: alpha(3), beta(3), gamma(1), delta(1), epsilon(1). CF(0) has three main subunits: a(1), b(2) and c(9-12). The alpha and beta chains form an alternating ring which encloses part of the gamma chain. CF(1) is attached to CF(0) by a central stalk formed by the gamma and epsilon chains, while a peripheral stalk is formed by the delta and b chains.

It is found in the cell membrane. The enzyme catalyses ATP + H2O + 4 H(+)(in) = ADP + phosphate + 5 H(+)(out). Functionally, produces ATP from ADP in the presence of a proton gradient across the membrane. The catalytic sites are hosted primarily by the beta subunits. The sequence is that of ATP synthase subunit beta from Clostridium botulinum (strain ATCC 19397 / Type A).